The following is a 272-amino-acid chain: Aquaporin-1 (272 aa).

Topologically, residues 1–11 (MASEFKKKLFW) are cytoplasmic. Residues 12-29 (RAVVAEFLAMILFIFISI) traverse the membrane as a helical segment. Topologically, residues 30–48 (GSALGFHYPIKSNQTTGAV) are extracellular. N-linked (GlcNAc...) asparagine glycosylation is present at asparagine 42. Residues 49 to 67 (QDNVKVSLAFGLSIATLAQ) form a helical membrane-spanning segment. Residues 68-70 (SVG) lie on the Cytoplasmic side of the membrane. The stretch at 71–84 (HISGAHLNPAVTLG) is an intramembrane region. Positions 78-80 (NPA) match the NPA 1 motif. The Cytoplasmic segment spans residues 85–92 (LLLSCQIS). Residues 93–111 (ILRAIMYIIAQCVGAIVAT) form a helical membrane-spanning segment. Over 112–135 (VILSGITSSLPDNSLGLNALAPGV) the chain is Extracellular. A helical membrane pass occupies residues 136 to 155 (NSGQGLGIEIIGTLQLVLCV). Topologically, residues 156 to 166 (LATTDRRRRRD) are cytoplasmic. The chain crosses the membrane as a helical span at residues 167–184 (LGDSGPLAIGFSVALGHL). The Extracellular portion of the chain corresponds to 185 to 189 (LAIDY). An intramembrane segment occupies 190–202 (TGCGINPARSFGS). The NPA 2 motif lies at 195 to 197 (NPA). Residues 203 to 209 (SVITHNF) lie on the Extracellular side of the membrane. Residues 210-227 (QDHWIFWVGPFIGAALAV) form a helical membrane-spanning segment. Residues 228-272 (LIYDFILAPRSSDLTDRVKVWTSGQVEEYDLDADDINSRVEMKPK) lie on the Cytoplasmic side of the membrane. A Phosphoserine modification is found at serine 250. Tyrosine 256 is modified (phosphotyrosine). The residue at position 265 (serine 265) is a Phosphoserine.

It belongs to the MIP/aquaporin (TC 1.A.8) family. Homotetramer; each monomer provides an independent water pore. Component of the ankyrin-1 complex in the erythrocyte, composed of ANK1, RHCE, RHAG, SLC4A1, EPB42, GYPA, GYPB and AQP1. Interacts with EPHB2; involved in endolymph production in the inner ear. Identified in a complex with STOM. Interacts (via the N-terminal) with ANK1 (via ANK 1-5 repeats). Interacts (via the C-terminal) with EPB42. In terms of tissue distribution, detected in fetal kidney (at protein level). Detected in fetal kidney.

It is found in the cell membrane. The catalysed reaction is H2O(in) = H2O(out). The enzyme catalyses nitric oxide(out) = nitric oxide(in). It catalyses the reaction CO2(out) = CO2(in). It carries out the reaction glycerol(in) = glycerol(out). The catalysed reaction is H2O2(out) = H2O2(in). The enzyme catalyses K(+)(in) = K(+)(out). It catalyses the reaction Na(+)(in) = Na(+)(out). Its function is as follows. Forms a water channel that facilitates the transport of water across cell membranes, playing a crucial role in water homeostasis in various tissues. Could also be permeable to small solutes including hydrogen peroxide, glycerol and gases such as amonnia (NH3), nitric oxide (NO) and carbon dioxide (CO2). Recruited to the ankyrin-1 complex, a multiprotein complex of the erythrocyte membrane, it could be part of a CO2 metabolon, linking facilitated diffusion of CO2 across the membrane, anion exchange of Cl(-)/HCO3(-) and interconversion of dissolved CO2 and carbonic acid in the cytosol. In vitro, it shows non-selective gated cation channel activity and may be permeable to cations like K(+) and Na(+) in vivo. This Ovis aries (Sheep) protein is Aquaporin-1.